A 186-amino-acid chain; its full sequence is Alkyl hydroperoxide reductase AhpD (186 aa).

Cys132 (proton donor) is an active-site residue. A disulfide bridge links Cys132 with Cys135. Cys135 serves as the catalytic Cysteine sulfenic acid (-SOH) intermediate.

Belongs to the AhpD family.

The catalysed reaction is N(6)-[(R)-dihydrolipoyl]-L-lysyl-[lipoyl-carrier protein] + a hydroperoxide = N(6)-[(R)-lipoyl]-L-lysyl-[lipoyl-carrier protein] + an alcohol + H2O. Its function is as follows. Antioxidant protein with alkyl hydroperoxidase activity. Required for the reduction of the AhpC active site cysteine residues and for the regeneration of the AhpC enzyme activity. The chain is Alkyl hydroperoxide reductase AhpD from Anaeromyxobacter dehalogenans (strain 2CP-C).